Reading from the N-terminus, the 251-residue chain is CDP-diacylglycerol pyrophosphatase (251 aa).

The helical transmembrane segment at 4–24 (AGLLFLVMIVIAVVAAGIGYW) threads the bilayer.

Belongs to the Cdh family.

It is found in the cell inner membrane. The catalysed reaction is a CDP-1,2-diacyl-sn-glycerol + H2O = a 1,2-diacyl-sn-glycero-3-phosphate + CMP + 2 H(+). Its pathway is phospholipid metabolism; CDP-diacylglycerol degradation; phosphatidate from CDP-diacylglycerol: step 1/1. The chain is CDP-diacylglycerol pyrophosphatase from Escherichia coli O7:K1 (strain IAI39 / ExPEC).